The chain runs to 640 residues: Fructose-1,6-bisphosphatase class 3 (640 aa).

The protein belongs to the FBPase class 3 family. Requires Mn(2+) as cofactor.

The catalysed reaction is beta-D-fructose 1,6-bisphosphate + H2O = beta-D-fructose 6-phosphate + phosphate. The protein operates within carbohydrate biosynthesis; gluconeogenesis. The protein is Fructose-1,6-bisphosphatase class 3 of Lactococcus lactis subsp. cremoris (strain MG1363).